Reading from the N-terminus, the 78-residue chain is Putative membrane protein insertion efficiency factor (78 aa).

This sequence belongs to the UPF0161 family.

The protein resides in the cell inner membrane. Its function is as follows. Could be involved in insertion of integral membrane proteins into the membrane. The chain is Putative membrane protein insertion efficiency factor from Prochlorococcus marinus subsp. pastoris (strain CCMP1986 / NIES-2087 / MED4).